We begin with the raw amino-acid sequence, 195 residues long: BAG family molecular chaperone regulator 1A (195 aa).

In terms of domain architecture, Ubiquitin-like spans 6-72; it reads STVTIHYGNQ…KLGLKNHSKI (67 aa). Residues 78-98 are disordered; the sequence is HKQQRGSKEKDTVEPAPKAEA. Positions 83–98 are enriched in basic and acidic residues; it reads GSKEKDTVEPAPKAEA. The BAG domain occupies 109–190; sequence EIKAIDQYVD…KMLDHVDQTS (82 aa).

As to quaternary structure, binds to the ATPase domain of HSP70/HSC chaperones.

Functionally, inhibits the chaperone activity of HSP70/HSC70 by promoting substrate release. This is BAG family molecular chaperone regulator 1A (bag101) from Schizosaccharomyces pombe (strain 972 / ATCC 24843) (Fission yeast).